The primary structure comprises 305 residues: GTP cyclohydrolase FolE2 (305 aa).

This sequence belongs to the GTP cyclohydrolase IV family.

It carries out the reaction GTP + H2O = 7,8-dihydroneopterin 3'-triphosphate + formate + H(+). The protein operates within cofactor biosynthesis; 7,8-dihydroneopterin triphosphate biosynthesis; 7,8-dihydroneopterin triphosphate from GTP: step 1/1. Functionally, converts GTP to 7,8-dihydroneopterin triphosphate. In Xanthomonas euvesicatoria pv. vesicatoria (strain 85-10) (Xanthomonas campestris pv. vesicatoria), this protein is GTP cyclohydrolase FolE2.